Consider the following 223-residue polypeptide: 2-C-methyl-D-erythritol 4-phosphate cytidylyltransferase (223 aa).

This sequence belongs to the IspD/TarI cytidylyltransferase family. IspD subfamily.

It carries out the reaction 2-C-methyl-D-erythritol 4-phosphate + CTP + H(+) = 4-CDP-2-C-methyl-D-erythritol + diphosphate. It participates in isoprenoid biosynthesis; isopentenyl diphosphate biosynthesis via DXP pathway; isopentenyl diphosphate from 1-deoxy-D-xylulose 5-phosphate: step 2/6. In terms of biological role, catalyzes the formation of 4-diphosphocytidyl-2-C-methyl-D-erythritol from CTP and 2-C-methyl-D-erythritol 4-phosphate (MEP). This is 2-C-methyl-D-erythritol 4-phosphate cytidylyltransferase from Prochlorococcus marinus subsp. pastoris (strain CCMP1986 / NIES-2087 / MED4).